The sequence spans 203 residues: 3-isopropylmalate dehydratase small subunit (203 aa).

Belongs to the LeuD family. LeuD type 1 subfamily. In terms of assembly, heterodimer of LeuC and LeuD.

The enzyme catalyses (2R,3S)-3-isopropylmalate = (2S)-2-isopropylmalate. It functions in the pathway amino-acid biosynthesis; L-leucine biosynthesis; L-leucine from 3-methyl-2-oxobutanoate: step 2/4. Its function is as follows. Catalyzes the isomerization between 2-isopropylmalate and 3-isopropylmalate, via the formation of 2-isopropylmaleate. The chain is 3-isopropylmalate dehydratase small subunit from Phenylobacterium zucineum (strain HLK1).